Reading from the N-terminus, the 267-residue chain is MKYEGWPDEGELVVGKVDDIEDFGVFVDLEQYQDKRGLVHVSEVASGWIKNVRDHVNEDQTVVAKVLGVDESAQQIDLSLKDVNDHQHSDTIQEWKNEQKADKWLTLAFGEDMADDQFRRIANGLLADFGSLYDGFEQAAIHGHEALADTALEDDEIDAIVETARDNVSVPYVTVTGYVSLQSPDGDGVDTIKDALQAAEGNGEVPDEVDLDVTYVGAPEYRLRVQAPNYKTAESALEAAGDRAVDSVTAHDGSGAFHRERQLDDDA.

In terms of domain architecture, S1 motif spans 10–81; it reads GELVVGKVDD…SAQQIDLSLK (72 aa).

This sequence belongs to the eIF-2-alpha family. As to quaternary structure, heterotrimer composed of an alpha, a beta and a gamma chain.

Its function is as follows. eIF-2 functions in the early steps of protein synthesis by forming a ternary complex with GTP and initiator tRNA. In Halobacterium salinarum (strain ATCC 29341 / DSM 671 / R1), this protein is Translation initiation factor 2 subunit alpha.